A 402-amino-acid chain; its full sequence is Sensor protein kinase FleS (402 aa).

The Histidine kinase domain occupies 188 to 393 (SLAHQIRTPL…CATLILPLIP (206 aa)). The residue at position 191 (H191) is a Phosphohistidine; by autocatalysis.

It catalyses the reaction ATP + protein L-histidine = ADP + protein N-phospho-L-histidine.. Its function is as follows. Member of the two-component regulatory system FleS/FleR that regulates the expression of multiple genes involved in flagellar synthesis, adhesion, swarming, motility and antibiotic resistance. May function as a membrane-associated protein kinase that phosphorylates FleR in response to environmental signals leading to activation of specific gene promoters. The protein is Sensor protein kinase FleS (fleS) of Pseudomonas aeruginosa (strain ATCC 15692 / DSM 22644 / CIP 104116 / JCM 14847 / LMG 12228 / 1C / PRS 101 / PAO1).